A 73-amino-acid polypeptide reads, in one-letter code: Protein SlyX homolog (73 aa).

The protein belongs to the SlyX family.

The sequence is that of Protein SlyX homolog from Haemophilus ducreyi (strain 35000HP / ATCC 700724).